Here is a 151-residue protein sequence, read N- to C-terminus: Large ribosomal subunit protein eL19 (151 aa).

Positions 62-93 are disordered; the sequence is RLKERRKKRSLKSEGKKSGSRKGKKGARANSK. Basic residues predominate over residues 79–88; the sequence is SGSRKGKKGA.

It belongs to the eukaryotic ribosomal protein eL19 family. Part of the 50S ribosomal subunit.

Functionally, binds to the 23S rRNA. The chain is Large ribosomal subunit protein eL19 from Saccharolobus solfataricus (strain ATCC 35092 / DSM 1617 / JCM 11322 / P2) (Sulfolobus solfataricus).